The sequence spans 377 residues: Succinyl-diaminopimelate desuccinylase (377 aa).

His66 contacts Zn(2+). Asp68 is an active-site residue. A Zn(2+)-binding site is contributed by Asp99. The active-site Proton acceptor is Glu133. Residues Glu134, Glu162, and His348 each coordinate Zn(2+).

It belongs to the peptidase M20A family. DapE subfamily. Homodimer. Zn(2+) is required as a cofactor. It depends on Co(2+) as a cofactor.

The enzyme catalyses N-succinyl-(2S,6S)-2,6-diaminopimelate + H2O = (2S,6S)-2,6-diaminopimelate + succinate. The protein operates within amino-acid biosynthesis; L-lysine biosynthesis via DAP pathway; LL-2,6-diaminopimelate from (S)-tetrahydrodipicolinate (succinylase route): step 3/3. Catalyzes the hydrolysis of N-succinyl-L,L-diaminopimelic acid (SDAP), forming succinate and LL-2,6-diaminopimelate (DAP), an intermediate involved in the bacterial biosynthesis of lysine and meso-diaminopimelic acid, an essential component of bacterial cell walls. This is Succinyl-diaminopimelate desuccinylase from Xylella fastidiosa (strain 9a5c).